The primary structure comprises 261 residues: Glucose 1-dehydrogenase A (261 aa).

11–35 (VITGGSTGLGRAMAVRFGQEEAKVV) contacts NADP(+). Ser145 is a binding site for substrate. Tyr158 acts as the Proton acceptor in catalysis.

This sequence belongs to the short-chain dehydrogenases/reductases (SDR) family. Homotetramer.

The enzyme catalyses D-glucose + NAD(+) = D-glucono-1,5-lactone + NADH + H(+). It carries out the reaction D-glucose + NADP(+) = D-glucono-1,5-lactone + NADPH + H(+). In Priestia megaterium (Bacillus megaterium), this protein is Glucose 1-dehydrogenase A (gdhA).